The following is a 78-amino-acid chain: Large ribosomal subunit protein bL28 (78 aa).

This sequence belongs to the bacterial ribosomal protein bL28 family.

The sequence is that of Large ribosomal subunit protein bL28 from Bordetella avium (strain 197N).